Consider the following 507-residue polypeptide: MVSATPPAPADGRRVALLTLGCARNEVDSEELAARLHSDGWQVTTDGEGADVVVVNTCGFVEKAKQDSIQTLLAAAETGAKVVAAGCMAERYGRELAESLPEAQAVLSFDDYPDISDRLGAVLAGTAIDAHTPRDRRELLPLTPVRRGEAAVSLPGHGTPAAVAQPGARSAPIEVDEHTPAHLRPVLRRRLDTGPVASLKLASGCDRRCAFCAIPAFRGAFVSRPPEALLAEAEWLARTGVRELVLVSENSSSYGKDLGDPRALEKLLPQLAAVDGIVRVRASYLQPAETRPGLVEAIATTPGVAPYFDLSFQHSSEAVLRRMRRFGSTDRFLELLGSIRALSPEAGARSNFIVGFPGETRADVAELVRFLEEARLDAIGVFDYSDEDGTEAAGLSGKVTTATVKRRYDRLSALADELCAQRAEQRLGSTVQVLVDSVDGGVVEGRAAHQAPEVDGSTTLVAPVGGGVDLTALRPGDLVECTVTATEGVDLVAVPDAMISAAPGVAR.

The MTTase N-terminal domain maps to 13 to 124 (RRVALLTLGC…ISDRLGAVLA (112 aa)). Residues C22, C58, C87, C205, C209, and C212 each contribute to the [4Fe-4S] cluster site. The 232-residue stretch at 191-422 (LDTGPVASLK…ALADELCAQR (232 aa)) folds into the Radical SAM core domain. A TRAM domain is found at 424–497 (EQRLGSTVQV…GVDLVAVPDA (74 aa)).

It belongs to the methylthiotransferase family. RimO subfamily. It depends on [4Fe-4S] cluster as a cofactor.

The protein localises to the cytoplasm. The enzyme catalyses L-aspartate(89)-[ribosomal protein uS12]-hydrogen + (sulfur carrier)-SH + AH2 + 2 S-adenosyl-L-methionine = 3-methylsulfanyl-L-aspartate(89)-[ribosomal protein uS12]-hydrogen + (sulfur carrier)-H + 5'-deoxyadenosine + L-methionine + A + S-adenosyl-L-homocysteine + 2 H(+). In terms of biological role, catalyzes the methylthiolation of an aspartic acid residue of ribosomal protein uS12. This Salinispora tropica (strain ATCC BAA-916 / DSM 44818 / JCM 13857 / NBRC 105044 / CNB-440) protein is Ribosomal protein uS12 methylthiotransferase RimO.